The primary structure comprises 44 residues: Conotoxin Fi11.11 (44 aa).

Cystine bridges form between Cys1-Cys15, Cys8-Cys20, Cys14-Cys24, and Cys19-Cys28. An Asparagine amide modification is found at Asn30. A propeptide spanning residues 35–44 (QVPLKSFGQR) is cleaved from the precursor.

This sequence belongs to the conotoxin I2 superfamily. As to expression, expressed by the venom duct.

The protein localises to the secreted. In Conus figulinus (Fig cone), this protein is Conotoxin Fi11.11.